A 272-amino-acid chain; its full sequence is MGDMRLVVAGAAGRMGRVLVQIVQQTPGAMVSGALARADSPAIGQDAGVLAGCGEIGVKISTDPLRAVADCDGVLDFTSPASTMVLATLAAQARVVHVIGTTGLSPEHLARLDAAARHAVIVQSGNMSLGVNLLAALVEKAARTLGPEFDIEIAEMHHRAKVDAPSGTALLLGEAAAKGRNIDLPSHSLRARDGHTGARPEGAIGFASLRGGGVVGEHKVYFAGAGERLELAHVAEDRSIFARGAVKAALWGRGRKSGLYSMADVLGLGDKI.

Position 10–15 (10–15) interacts with NAD(+); the sequence is GAAGRM. Position 37 (Arg-37) interacts with NADP(+). NAD(+) contacts are provided by residues 100 to 102 and 124 to 127; these read GTT and SGNM. His-157 serves as the catalytic Proton donor/acceptor. His-158 provides a ligand contact to (S)-2,3,4,5-tetrahydrodipicolinate. Lys-161 (proton donor) is an active-site residue. Residue 167 to 168 coordinates (S)-2,3,4,5-tetrahydrodipicolinate; that stretch reads GT.

The protein belongs to the DapB family.

The protein localises to the cytoplasm. The catalysed reaction is (S)-2,3,4,5-tetrahydrodipicolinate + NAD(+) + H2O = (2S,4S)-4-hydroxy-2,3,4,5-tetrahydrodipicolinate + NADH + H(+). It carries out the reaction (S)-2,3,4,5-tetrahydrodipicolinate + NADP(+) + H2O = (2S,4S)-4-hydroxy-2,3,4,5-tetrahydrodipicolinate + NADPH + H(+). Its pathway is amino-acid biosynthesis; L-lysine biosynthesis via DAP pathway; (S)-tetrahydrodipicolinate from L-aspartate: step 4/4. Catalyzes the conversion of 4-hydroxy-tetrahydrodipicolinate (HTPA) to tetrahydrodipicolinate. This chain is 4-hydroxy-tetrahydrodipicolinate reductase, found in Methylocella silvestris (strain DSM 15510 / CIP 108128 / LMG 27833 / NCIMB 13906 / BL2).